A 282-amino-acid polypeptide reads, in one-letter code: 2-dehydro-3-deoxyphosphooctonate aldolase (282 aa).

It belongs to the KdsA family.

Its subcellular location is the cytoplasm. It catalyses the reaction D-arabinose 5-phosphate + phosphoenolpyruvate + H2O = 3-deoxy-alpha-D-manno-2-octulosonate-8-phosphate + phosphate. It participates in carbohydrate biosynthesis; 3-deoxy-D-manno-octulosonate biosynthesis; 3-deoxy-D-manno-octulosonate from D-ribulose 5-phosphate: step 2/3. The protein operates within bacterial outer membrane biogenesis; lipopolysaccharide biosynthesis. The polypeptide is 2-dehydro-3-deoxyphosphooctonate aldolase (Shewanella sp. (strain W3-18-1)).